Here is a 407-residue protein sequence, read N- to C-terminus: Arginine deiminase (407 aa).

The Amidino-cysteine intermediate role is filled by Cys397.

Belongs to the arginine deiminase family.

The protein resides in the cytoplasm. It catalyses the reaction L-arginine + H2O = L-citrulline + NH4(+). It participates in amino-acid degradation; L-arginine degradation via ADI pathway; carbamoyl phosphate from L-arginine: step 1/2. This is Arginine deiminase (arcA) from Escherichia coli O6:H1 (strain CFT073 / ATCC 700928 / UPEC).